The following is an 806-amino-acid chain: MYNHNKIEKKWQKYWLDNKTFKFVDNPNNPKKFYVLDMFPYPSGKGLHVGHPKGYTATDVISRFKRLNGYDVLHPIGWDAFGLPAEQYALETNNHPHTFTQQNIKIFRKQLQMIGFDFDYDKEVDTTDPQFYQWTQWIFVQLYKHNLAEIQDIDVNWCENLGTVLSNEEVVLNDKNERVSERGGHPVVRKPMKQWVLKIVDYADKLLDGLNEVEFSESLKSLQRNWIGKSIGTNVQFKIKDSHLALDVFTTRIDTIYGAQYLVVAPEHPILKSIVSEQQASVVQAYVDQTKKISDLDRIADTNKTGVFSGTYAINPINQEIIPIWVSDYVLMNFATGAVMGVPAHDERDYAFAKKYDLPIKSVIDTKQSLPYTGDGLHINSPMINGLNIEQSQNILNDYLVKNHLAKRVVNYKLRNWIFSRQRYWGEPFPVLFDENNQIKIIEDLPVLLPNLDEFKPSKTGESPLANAQEWLYVEIDGKKYRRETNTMPQWAGSSWYFLAYILKNEDGSYTPLNSEEAKKRFAKWLPVDVYIGGQEHAVLHLLYARFWHRFLYDIGVVPTKEPFYKVINQGMILGENNEKMSKSKGNVINPDDIIASHGADTLRIYEMFMGPLTASLPWSPDGLDAMRKWLDRVYRLYHNLSELEVVEDVNKLNEEIIITYHTLIKNYTKAINEQAFNIAISEMMVFVNVLYKNKVINYKLLDNFLILLSCFAPHLAEELYSLNHSESVCLQKMPIYDEQKIIAQNVTIPIQINGKLKHTINVLRDTNAEQLINLALACEQVKQAIGDQPIKKQIVVVNKIINFVI.

The 'HIGH' region signature appears at 40-51; it reads PYPSGKGLHVGH. A 'KMSKS' region motif is present at residues 580–584; the sequence is KMSKS. Lys-583 contacts ATP.

Belongs to the class-I aminoacyl-tRNA synthetase family.

It localises to the cytoplasm. It carries out the reaction tRNA(Leu) + L-leucine + ATP = L-leucyl-tRNA(Leu) + AMP + diphosphate. In Ureaplasma urealyticum serovar 10 (strain ATCC 33699 / Western), this protein is Leucine--tRNA ligase.